A 72-amino-acid chain; its full sequence is Protein RALF-like 11 (72 aa).

Residues M1–A17 form the signal peptide. Disulfide bonds link C34–C43 and C63–C69.

This sequence belongs to the plant rapid alkalinization factor (RALF) family.

It is found in the secreted. Its function is as follows. Cell signaling peptide that may regulate plant stress, growth, and development. Mediates a rapid alkalinization of extracellular space by mediating a transient increase in the cytoplasmic Ca(2+) concentration leading to a calcium-dependent signaling events through a cell surface receptor and a concomitant activation of some intracellular mitogen-activated protein kinases. In Arabidopsis thaliana (Mouse-ear cress), this protein is Protein RALF-like 11 (RALFL11).